We begin with the raw amino-acid sequence, 506 residues long: UPF0522 protein A (506 aa).

A signal peptide spans 1–18; the sequence is MIKSLLLLISIIIGIVIS. N-linked (GlcNAc...) asparagine glycans are attached at residues Asn-145, Asn-155, Asn-330, Asn-366, Asn-418, and Asn-427.

Belongs to the UPF0522 family.

The protein resides in the secreted. In Dictyostelium discoideum (Social amoeba), this protein is UPF0522 protein A.